Here is a 538-residue protein sequence, read N- to C-terminus: Putative cysteine ligase BshC (538 aa).

Positions 460–484 (KINEQIELLERMLKRNVEKKHEVEL) form a coiled coil.

This sequence belongs to the BshC family.

Its function is as follows. Involved in bacillithiol (BSH) biosynthesis. May catalyze the last step of the pathway, the addition of cysteine to glucosamine malate (GlcN-Mal) to generate BSH. This is Putative cysteine ligase BshC from Bacillus cereus (strain ZK / E33L).